Reading from the N-terminus, the 139-residue chain is Large ribosomal subunit protein uL16c (139 aa).

It belongs to the universal ribosomal protein uL16 family. In terms of assembly, part of the 50S ribosomal subunit.

It is found in the plastid. It localises to the chloroplast. This is Large ribosomal subunit protein uL16c from Cryptomeria japonica (Japanese cedar).